Consider the following 319-residue polypeptide: Cobalamin biosynthesis protein CobD (319 aa).

The next 4 membrane-spanning stretches (helical) occupy residues 55-75, 78-98, 153-173, and 296-316; these read AVMW…VLAL, EIHP…VLAG, VDGI…LAMA, and LMWV…CLLV.

It belongs to the CobD/CbiB family.

The protein resides in the cell membrane. The protein operates within cofactor biosynthesis; adenosylcobalamin biosynthesis. Converts cobyric acid to cobinamide by the addition of aminopropanol on the F carboxylic group. The chain is Cobalamin biosynthesis protein CobD from Citrobacter koseri (strain ATCC BAA-895 / CDC 4225-83 / SGSC4696).